Consider the following 105-residue polypeptide: Antitoxin YfjZ (105 aa).

Belongs to the CbeA/YafW/YfjZ antitoxin family.

Antitoxin component of a type IV toxin-antitoxin (TA) system. Antitoxin that counteracts the effect of cognate toxin YpjF. Also counteracts the effect of non-cognate toxins CbtA and YfkI. The polypeptide is Antitoxin YfjZ (yfjZ) (Escherichia coli (strain K12)).